We begin with the raw amino-acid sequence, 409 residues long: Shaggy-related protein kinase gamma (409 aa).

Ala-2 is modified (N-acetylalanine). One can recognise a Protein kinase domain in the interval 73–357 (YMAERVVGHG…ALDSLVHPFF (285 aa)). ATP-binding positions include 79–87 (VGHGSFGVV) and Lys-102. Asp-198 serves as the catalytic Proton acceptor. Tyr-233 carries the phosphotyrosine modification.

This sequence belongs to the protein kinase superfamily. CMGC Ser/Thr protein kinase family. GSK-3 subfamily. As to quaternary structure, binds to KIB1. Component of a complex made of POLAR, BASL, ASK7/BIN2 and ASK3/SK12. Binds to POLAR and BASL. Post-translationally, autophosphorylated mainly on threonine and serine residues. In terms of tissue distribution, roots, shoots and leaves.

It localises to the cytoplasm. Its subcellular location is the cell cortex. The catalysed reaction is L-seryl-[protein] + ATP = O-phospho-L-seryl-[protein] + ADP + H(+). The enzyme catalyses L-threonyl-[protein] + ATP = O-phospho-L-threonyl-[protein] + ADP + H(+). Its function is as follows. May mediate extracellular signals to regulate transcription in differentiating cells. Probably involved first at the cortical polarity site, to restrict MAPK signaling and promote asymmetric cell division (ACD), and second in the nucleus of stomatal lineage ground cells (SLGCs) or meristemoids, to limit cell division and to promote differentiation into pavement or stomatal guard cells, respectively. Phosphorylate YDA and SPCH in vitro. This Arabidopsis thaliana (Mouse-ear cress) protein is Shaggy-related protein kinase gamma.